Consider the following 363-residue polypeptide: MKCKLIFAVFMLAFSMPSQAERIKDIANVQGVRNNQLIGYGLVVGLPGTGEKTNYTEQTFTTMLKNFGINLPENFRPKIKNVAVVAVHADMPAFIKPGQELDVTVSSLGEAKSLRGGTLLQTFLKGVDGNVYAIAQGSLVVSGFSADGLDGSKVIQNTPTVGRIPNGAIVERSVATPFSTGDYLTFNLRRSDFSTAQRMADAINDLLGPDMARPLDATSIQVSAPRDVSQRVSFLATLENIEVEPAEESAKVIVNSRTGTIVVGQNVKLLPAAVTHGGLTVTIAEATQVSQPNALANGQTTVTSNSTINATESDRRMFMFNPGTTLDELVRAVNLVGAAPSDVLAILEALKVAGALHGELIII.

The signal sequence occupies residues Met1–Ala20.

It belongs to the FlgI family. In terms of assembly, the basal body constitutes a major portion of the flagellar organelle and consists of four rings (L,P,S, and M) mounted on a central rod.

It localises to the periplasm. It is found in the bacterial flagellum basal body. Its function is as follows. Assembles around the rod to form the L-ring and probably protects the motor/basal body from shearing forces during rotation. This Shewanella oneidensis (strain ATCC 700550 / JCM 31522 / CIP 106686 / LMG 19005 / NCIMB 14063 / MR-1) protein is Flagellar P-ring protein.